An 888-amino-acid polypeptide reads, in one-letter code: MGSGPIDPKELLKGLDSFLTRDGEVKSVDGISKIFSLMKEARKMVSRCTYLNIILQTRAPEVLVKFIDVGGYKLLNNWLTYSKTTNNIPLLQQILLTLQHLPLTVDHLKQNNTAKLVKQLSKSSEDEELRKLASVLVSDWMAVIRSQSSTQPAEKDKKKRKEEGKSRTTLPERPLTEVKAETRAEEAPEKKKEKPKSLRTTAPSHAKFRSTGLELDTPSLVPVKKNSSTVVVSDKYNLKPIPLKRQSATAAPGDAAPPAEKKYKPLNTAPNTTKEIKVKIIPPQPMEGLGFLDALNSAPVPGIKIKKKKKVLSPTAAKPSPFEGKTSTEQSTAKPSSPEPAPPAEPMDTDRPGTPVPPVEVPELMDAASSEPGALDAKPVDSPGDPNQLTRKGRKRKTVTWPEEGKLREYFYFELDETERVNVNKIKDFGEAAKREILSDRHAFETARRLSHDNMEEKVPWVCPRPLVLPSPLVIPGSNSQERYIQAEREKGILQELFLNKESPHEPDPEPYEPIPPKLIPLDEECAMDETPYVETLEPGGSGGSPDGAGGSKLPPVLANLMGSMGAGKSPQGPGGGGINVQEILTSIMGSPNSHPSEELLKQPDYSDKLKQMLVPHGLLGPGPVANGFPPGGPGGPKGMQHFPPGPGGPMPGPHGGPGGPVGPRLLGPPPPSRGGDPFWDGPGDPMRGGPMRGGPGPAPGPYHRGRGGRGGNEPPPPPPFRGARGGRSGGGPPNGRGGPGGGGMVGGGGHRPHEGPGGSMGSGHRSHDGPGGNMGSGHRSHDGPGGNMGGSGGHRSHEGPGHGGPHGHRPHDVPSHRGHDHRGPPPHEHRGHDGHGGGGHRGHDGGHSHGGDMSNRPVCRHFMMKGNCRYENNCAFYHPGVNGPPLP.

The interval 1 to 348 (MGSGPIDPKE…EPAPPAEPMD (348 aa)) is interaction with TOX4. A TFIIS N-terminal domain is found at 73–147 (KLLNNWLTYS…SDWMAVIRSQ (75 aa)). 4 disordered regions span residues 147–213 (QSST…STGL), 247–270 (SATAAPGDAAPPAEKKYKPLNTAP), 306–400 (KKKK…KTVT), and 534–853 (VETL…HGGD). Composition is skewed to basic and acidic residues over residues 153-166 (AEKDKKKRKEEGKS) and 174-196 (PLTEVKAETRAEEAPEKKKEKPK). Lys179 is covalently cross-linked (Glycyl lysine isopeptide (Lys-Gly) (interchain with G-Cter in SUMO2)). Residues 248 to 258 (ATAAPGDAAPP) show a composition bias toward low complexity. Lys262 participates in a covalent cross-link: Glycyl lysine isopeptide (Lys-Gly) (interchain with G-Cter in SUMO2). Ser313 is subject to Phosphoserine. Polar residues predominate over residues 325–334 (KTSTEQSTAK). Residue Ser382 is modified to Phosphoserine. The interval 388-417 (QLTRKGRKRKTVTWPEEGKLREYFYFELDE) is necessary for interaction with PPP1CA. The interval 393–408 (GRKRKTVTWPEEGKLR) is necessary for interaction with PPP1CC. Residues 394 to 423 (RKRKTVTWPEEGKLREYFYFELDETERVNV) carry the PP1-binding motif motif. A Phosphothreonine modification is found at Thr398. The tract at residues 418–619 (TERVNVNKIK…LKQMLVPHGL (202 aa)) is interaction with WDR82. The span at 540–551 (GGSGGSPDGAGG) shows a compositional bias: gly residues. Ser545 and Ser591 each carry phosphoserine. Over residues 583–595 (EILTSIMGSPNSH) the composition is skewed to polar residues. Residues 596 to 611 (PSEELLKQPDYSDKLK) show a composition bias toward basic and acidic residues. Residues 644-655 (PPGPGGPMPGPH) show a composition bias toward pro residues. Residue Arg665 is modified to Omega-N-methylarginine. Positions 674–690 (RGGDPFWDGPGDPMRGG) are enriched in low complexity. Residues Arg693 and Arg737 each carry the omega-N-methylarginine modification. 2 stretches are compositionally biased toward gly residues: residues 724-762 (ARGGRSGGGPPNGRGGPGGGGMVGGGGHRPHEGPGGSMG) and 784-794 (GPGGNMGGSGG). Basic and acidic residues predominate over residues 811–851 (PHDVPSHRGHDHRGPPPHEHRGHDGHGGGGHRGHDGGHSHG). Residues 854 to 882 (MSNRPVCRHFMMKGNCRYENNCAFYHPGV) form a C3H1-type zinc finger.

In terms of assembly, component of the PNUTS-PP1 complex (also named PTW/PP1 complex), composed of PPP1R10/PNUTS, TOX4, WDR82, and PPP1CA (or PPP1CB or PPP1CC). In terms of processing, phosphorylated on Ser-398 by PKA within the region necessary for interaction with PPP1CA.

Its subcellular location is the nucleus. It localises to the chromosome. Its function is as follows. Substrate-recognition component of the PNUTS-PP1 protein phosphatase complex, a protein phosphatase 1 (PP1) complex that promotes RNA polymerase II transcription pause-release, allowing transcription elongation. Promoter-proximal pausing by RNA polymerase II is a transcription halt following transcription initiation but prior to elongation, which acts as a checkpoint to control that transcripts are favorably configured for transcriptional elongation. The PNUTS-PP1 complex mediates the release of RNA polymerase II from promoter-proximal region of genes by catalyzing dephosphorylation of proteins involved in transcription, such as AFF4, CDK9, MEPCE, INTS12, NCBP1, POLR2M/GDOWN1 and SUPT6H. The PNUTS-PP1 complex also regulates RNA polymerase II transcription termination by mediating dephosphorylation of SUPT5H in termination zones downstream of poly(A) sites, thereby promoting deceleration of RNA polymerase II transcription. PNUTS-PP1 complex is also involved in the response to replication stress by mediating dephosphorylation of POLR2A at 'Ser-5' of the CTD, promoting RNA polymerase II degradation. The PNUTS-PP1 complex also plays a role in the control of chromatin structure and cell cycle progression during the transition from mitosis into interphase. PNUTS-PP1 complex mediates dephosphorylation of MYC, promoting MYC stability by preventing MYC ubiquitination by the SCF(FBXW7) complex. In addition to acts as a substrate-recognition component, PPP1R10/PNUTS also acts as a nuclear targeting subunit for the PNUTS-PP1 complex. In some context, PPP1R10/PNUTS also acts as an inhibitor of protein phosphatase 1 (PP1) activity by preventing access to substrates, such as RB. The sequence is that of Serine/threonine-protein phosphatase 1 regulatory subunit 10 from Mus musculus (Mouse).